Consider the following 225-residue polypeptide: Probable septum site-determining protein MinC (225 aa).

The protein belongs to the MinC family. Interacts with MinD and FtsZ.

In terms of biological role, cell division inhibitor that blocks the formation of polar Z ring septums. Rapidly oscillates between the poles of the cell to destabilize FtsZ filaments that have formed before they mature into polar Z rings. Prevents FtsZ polymerization. The chain is Probable septum site-determining protein MinC from Listeria monocytogenes serotype 4b (strain CLIP80459).